A 67-amino-acid chain; its full sequence is uncharacterized protein (67 aa).

Helical transmembrane passes span 10-30 (EFFI…IIMW) and 40-60 (LMVG…WMVF).

The protein belongs to the plectrovirus ORF10 family.

The protein localises to the host membrane. This is an uncharacterized protein from Spiroplasma melliferum (SpV1).